The chain runs to 147 residues: Large ribosomal subunit protein uL15 (147 aa).

The tract at residues 1–46 is disordered; that stretch reads MSIRLENLSYTPGARKEKHRKGRGHAAGKGKQAGRGQSGQKKRSTV. Residues 16–28 are compositionally biased toward basic residues; that stretch reads KEKHRKGRGHAAG.

Belongs to the universal ribosomal protein uL15 family. As to quaternary structure, part of the 50S ribosomal subunit.

In terms of biological role, binds to the 23S rRNA. This chain is Large ribosomal subunit protein uL15, found in Mesomycoplasma hyopneumoniae (strain J / ATCC 25934 / NCTC 10110) (Mycoplasma hyopneumoniae).